The following is a 1218-amino-acid chain: ATP-dependent helicase/deoxyribonuclease subunit B (1218 aa).

Positions 1–279 constitute a UvrD-like helicase ATP-binding domain; it reads MRFIVGRAGT…VFLTETHRFE (279 aa). 6–13 serves as a coordination point for ATP; the sequence is GRAGTGKS. Residues 281–588 form the UvrD-like helicase C-terminal domain; that stretch reads AGLKHLERFY…LVGSLDRSRN (308 aa). C786 serves as a coordination point for [4Fe-4S] cluster. The disordered stretch occupies residues 987-1006; that stretch reads LAEGSKGSEGSEGSEDSEDS. C1126, C1129, and C1135 together coordinate [4Fe-4S] cluster. Residues 1160–1169 show a composition bias toward polar residues; sequence RVQSQDSEQY. A disordered region spans residues 1160-1218; that stretch reads RVQSQDSEQYPEQHPPTSVPGETSRRALQKDGGNSPRGQELIWLGEDEAGAGKEDDGHE. Positions 1209-1218 are enriched in basic and acidic residues; sequence GAGKEDDGHE.

It belongs to the helicase family. AddB/RexB type 1 subfamily. Heterodimer of AddA and AddB. It depends on Mg(2+) as a cofactor. Requires [4Fe-4S] cluster as cofactor.

The heterodimer acts as both an ATP-dependent DNA helicase and an ATP-dependent, dual-direction single-stranded exonuclease. Recognizes the chi site generating a DNA molecule suitable for the initiation of homologous recombination. The AddB subunit has 5' -&gt; 3' nuclease activity but not helicase activity. The sequence is that of ATP-dependent helicase/deoxyribonuclease subunit B from Desulfitobacterium hafniense (strain DSM 10664 / DCB-2).